The primary structure comprises 215 residues: Large ribosomal subunit protein bL25 (215 aa).

Composition is skewed to polar residues over residues 1–19 (MAKS…NTGK) and 206–215 (ENKTAATESE). 2 disordered regions span residues 1 to 29 (MAKS…RRDG) and 190 to 215 (AKYA…TESE).

Belongs to the bacterial ribosomal protein bL25 family. CTC subfamily. Part of the 50S ribosomal subunit; part of the 5S rRNA/L5/L18/L25 subcomplex. Contacts the 5S rRNA. Binds to the 5S rRNA independently of L5 and L18.

Functionally, this is one of the proteins that binds to the 5S RNA in the ribosome where it forms part of the central protuberance. The polypeptide is Large ribosomal subunit protein bL25 (Mycobacterium leprae (strain TN)).